A 165-amino-acid polypeptide reads, in one-letter code: SPbeta prophage-derived uncharacterized protein YorR (165 aa).

The chain is SPbeta prophage-derived uncharacterized protein YorR (yorR) from Bacillus subtilis (strain 168).